The following is a 387-amino-acid chain: 3-hydroxyisobutyryl-CoA hydrolase-like protein 5 (387 aa).

N-acetylalanine is present on Ala2.

The protein belongs to the enoyl-CoA hydratase/isomerase family.

This is 3-hydroxyisobutyryl-CoA hydrolase-like protein 5 from Arabidopsis thaliana (Mouse-ear cress).